The following is a 455-amino-acid chain: Ribosomal protein uS12 methylthiotransferase RimO (455 aa).

The 111-residue stretch at 21–131 folds into the MTTase N-terminal domain; that stretch reads GKVGFISLGC…VVGAVHQYVP (111 aa). Residues C30, C66, C95, C164, C168, and C171 each coordinate [4Fe-4S] cluster. Positions 150-387 constitute a Radical SAM core domain; the sequence is LTPRHYAYLK…MAKQAEISAA (238 aa). Residues 390-455 enclose the TRAM domain; it reads QAKIGRTIDV…DEHDLWARLI (66 aa).

This sequence belongs to the methylthiotransferase family. RimO subfamily. [4Fe-4S] cluster is required as a cofactor.

It is found in the cytoplasm. It carries out the reaction L-aspartate(89)-[ribosomal protein uS12]-hydrogen + (sulfur carrier)-SH + AH2 + 2 S-adenosyl-L-methionine = 3-methylsulfanyl-L-aspartate(89)-[ribosomal protein uS12]-hydrogen + (sulfur carrier)-H + 5'-deoxyadenosine + L-methionine + A + S-adenosyl-L-homocysteine + 2 H(+). Catalyzes the methylthiolation of an aspartic acid residue of ribosomal protein uS12. This is Ribosomal protein uS12 methylthiotransferase RimO from Marinobacter nauticus (strain ATCC 700491 / DSM 11845 / VT8) (Marinobacter aquaeolei).